A 101-amino-acid chain; its full sequence is Small ribosomal subunit protein uS14 (101 aa).

Residues 32-67 are disordered; the sequence is SDAKRSDEEREAARLGLQKLPRNANPTRQRNRCEIT. Residues 33-44 are compositionally biased toward basic and acidic residues; sequence DAKRSDEEREAA.

Belongs to the universal ribosomal protein uS14 family. As to quaternary structure, part of the 30S ribosomal subunit. Contacts proteins S3 and S10.

In terms of biological role, binds 16S rRNA, required for the assembly of 30S particles and may also be responsible for determining the conformation of the 16S rRNA at the A site. This Paracidovorax citrulli (strain AAC00-1) (Acidovorax citrulli) protein is Small ribosomal subunit protein uS14.